A 1411-amino-acid polypeptide reads, in one-letter code: Protein ECM5 (1411 aa).

The region spanning 118–159 (IPTFILAKKELPDPIKFYELVEDLGSVYGCVKLKIIPDADKF) is the JmjN domain. Positions 185-279 (RTKIVDFYAK…ILLDFDIYEE (95 aa)) constitute an ARID domain. The segment at 285–312 (RNNEKNEDMVESEIFRHSNSRSRDEEEP) is disordered. The JmjC domain maps to 476-695 (KNILDQWNLD…FSSEAAKWTS (220 aa)). Residues 1238 to 1290 (TKYCFCRRVEEGTAMVECEICKEWYHVDCISNGELVPPDDPNVLFVCSICTPP) form a PHD-type zinc finger.

It is found in the nucleus. May be involved in cell wall organization and biogenesis. This is Protein ECM5 (ECM5) from Saccharomyces cerevisiae (strain ATCC 204508 / S288c) (Baker's yeast).